The primary structure comprises 430 residues: Histidine--tRNA ligase (430 aa).

It belongs to the class-II aminoacyl-tRNA synthetase family. As to quaternary structure, homodimer.

It localises to the cytoplasm. It carries out the reaction tRNA(His) + L-histidine + ATP = L-histidyl-tRNA(His) + AMP + diphosphate + H(+). The polypeptide is Histidine--tRNA ligase (Acaryochloris marina (strain MBIC 11017)).